A 223-amino-acid polypeptide reads, in one-letter code: Endonuclease NucS (223 aa).

The protein belongs to the NucS endonuclease family.

Its subcellular location is the cytoplasm. Functionally, cleaves both 3' and 5' ssDNA extremities of branched DNA structures. The chain is Endonuclease NucS from Mycolicibacterium vanbaalenii (strain DSM 7251 / JCM 13017 / BCRC 16820 / KCTC 9966 / NRRL B-24157 / PYR-1) (Mycobacterium vanbaalenii).